We begin with the raw amino-acid sequence, 296 residues long: Nitrogenase iron protein (296 aa).

ATP is bound at residue 10 to 17 (GKGGIGKS). C98 provides a ligand contact to [4Fe-4S] cluster. At R101 the chain carries ADP-ribosylarginine; by dinitrogenase reductase ADP-ribosyltransferase. C133 is a [4Fe-4S] cluster binding site.

The protein belongs to the NifH/BchL/ChlL family. Homodimer. It depends on [4Fe-4S] cluster as a cofactor. The reversible ADP-ribosylation of Arg-101 inactivates the nitrogenase reductase and regulates nitrogenase activity.

The catalysed reaction is N2 + 8 reduced [2Fe-2S]-[ferredoxin] + 16 ATP + 16 H2O = H2 + 8 oxidized [2Fe-2S]-[ferredoxin] + 2 NH4(+) + 16 ADP + 16 phosphate + 6 H(+). In terms of biological role, the key enzymatic reactions in nitrogen fixation are catalyzed by the nitrogenase complex, which has 2 components: the iron protein and the molybdenum-iron protein. In Magnetococcus marinus (strain ATCC BAA-1437 / JCM 17883 / MC-1), this protein is Nitrogenase iron protein.